Consider the following 159-residue polypeptide: MQQAPVILSTLDKLLNWGRSNSLWPLTYGLACCAIEMMATGGSRFDFDRFGTIFRASPRQSDVMIIAGTLTKKHAEFMRRLYDQMPEPKWVISMGSCANTGGMFNTYATVQGADRVVPVDIYLPGCAPRPETLQYALMVLQDKIRRSKAIKQDAPKRLV.

[4Fe-4S] cluster is bound by residues cysteine 32, cysteine 33, cysteine 97, and cysteine 126.

It belongs to the complex I 20 kDa subunit family. As to quaternary structure, NDH-1 is composed of 14 different subunits. Subunits NuoB, C, D, E, F, and G constitute the peripheral sector of the complex. The cofactor is [4Fe-4S] cluster.

It is found in the cell inner membrane. The catalysed reaction is a quinone + NADH + 5 H(+)(in) = a quinol + NAD(+) + 4 H(+)(out). In terms of biological role, NDH-1 shuttles electrons from NADH, via FMN and iron-sulfur (Fe-S) centers, to quinones in the respiratory chain. The immediate electron acceptor for the enzyme in this species is believed to be ubiquinone. Couples the redox reaction to proton translocation (for every two electrons transferred, four hydrogen ions are translocated across the cytoplasmic membrane), and thus conserves the redox energy in a proton gradient. The chain is NADH-quinone oxidoreductase subunit B from Helicobacter pylori (strain J99 / ATCC 700824) (Campylobacter pylori J99).